The primary structure comprises 283 residues: Undecaprenyl-diphosphatase (283 aa).

Transmembrane regions (helical) follow at residues 47–67, 94–114, 127–147, 197–217, 227–247, and 261–281; these read PGLS…IAYF, LGIA…CIKL, VPAI…AELL, AARF…LVEL, GGVL…WLAI, and IFVV…SGSA.

This sequence belongs to the UppP family.

Its subcellular location is the cell inner membrane. It carries out the reaction di-trans,octa-cis-undecaprenyl diphosphate + H2O = di-trans,octa-cis-undecaprenyl phosphate + phosphate + H(+). Its function is as follows. Catalyzes the dephosphorylation of undecaprenyl diphosphate (UPP). Confers resistance to bacitracin. This Synechococcus sp. (strain CC9311) protein is Undecaprenyl-diphosphatase.